A 363-amino-acid chain; its full sequence is Isopentenyl-diphosphate delta-isomerase (363 aa).

Residue 7 to 8 coordinates substrate; the sequence is RK. FMN contacts are provided by residues 71-73, serine 101, and asparagine 130; that span reads AMT. Residue glutamine 160 coordinates substrate. A Mg(2+)-binding site is contributed by glutamate 161. Residues lysine 192, serine 217, threonine 222, 270-272, and 291-292 each bind FMN; these read GIR and AG.

The protein belongs to the IPP isomerase type 2 family. In terms of assembly, homooctamer. Dimer of tetramers. The cofactor is FMN. It depends on NADPH as a cofactor. Mg(2+) is required as a cofactor.

It is found in the cytoplasm. It catalyses the reaction isopentenyl diphosphate = dimethylallyl diphosphate. Its function is as follows. Involved in the biosynthesis of isoprenoids. Catalyzes the 1,3-allylic rearrangement of the homoallylic substrate isopentenyl (IPP) to its allylic isomer, dimethylallyl diphosphate (DMAPP). The sequence is that of Isopentenyl-diphosphate delta-isomerase from Symbiobacterium thermophilum (strain DSM 24528 / JCM 14929 / IAM 14863 / T).